A 442-amino-acid polypeptide reads, in one-letter code: Zinc finger protein sfp1 (442 aa).

Residues 193–208 are compositionally biased toward low complexity; that stretch reads AASSDMSSDEASSQAE. Disordered stretches follow at residues 193–219 and 304–333; these read AASS…MPES and SPFV…HDSP. C2H2-type zinc fingers lie at residues 350 to 375 and 399 to 422; these read YKCP…LHGH and YRCE…THSH.

It localises to the cytoplasm. The protein resides in the nucleus. This Schizosaccharomyces pombe (strain 972 / ATCC 24843) (Fission yeast) protein is Zinc finger protein sfp1 (sfp1).